A 728-amino-acid chain; its full sequence is 1,4-alpha-glucan branching enzyme GlgB (728 aa).

Asp405 acts as the Nucleophile in catalysis. The active-site Proton donor is the Glu458.

This sequence belongs to the glycosyl hydrolase 13 family. GlgB subfamily. Monomer.

It catalyses the reaction Transfers a segment of a (1-&gt;4)-alpha-D-glucan chain to a primary hydroxy group in a similar glucan chain.. It participates in glycan biosynthesis; glycogen biosynthesis. In terms of biological role, catalyzes the formation of the alpha-1,6-glucosidic linkages in glycogen by scission of a 1,4-alpha-linked oligosaccharide from growing alpha-1,4-glucan chains and the subsequent attachment of the oligosaccharide to the alpha-1,6 position. This is 1,4-alpha-glucan branching enzyme GlgB from Salmonella arizonae (strain ATCC BAA-731 / CDC346-86 / RSK2980).